Here is a 103-residue protein sequence, read N- to C-terminus: uncharacterized protein (103 aa).

Residues Pro35–Tyr57 traverse the membrane as a helical segment.

It is found in the host membrane. This is an uncharacterized protein from Acidianus bottle-shaped virus (isolate Italy/Pozzuoli) (ABV).